Reading from the N-terminus, the 467-residue chain is Trigger factor (467 aa).

In terms of domain architecture, PPIase FKBP-type spans 174–261 (SDIAILTFKG…LQDLKTRELP (88 aa)). The interval 439–467 (PKKALNEKVKSSKPKNTQKKTDKTKKDSP) is disordered. Residues 457-467 (KKTDKTKKDSP) show a composition bias toward basic and acidic residues.

Belongs to the FKBP-type PPIase family. Tig subfamily.

It is found in the cytoplasm. It catalyses the reaction [protein]-peptidylproline (omega=180) = [protein]-peptidylproline (omega=0). Involved in protein export. Acts as a chaperone by maintaining the newly synthesized protein in an open conformation. Functions as a peptidyl-prolyl cis-trans isomerase. This chain is Trigger factor, found in Prochlorococcus marinus (strain SARG / CCMP1375 / SS120).